Consider the following 225-residue polypeptide: Uracil-DNA glycosylase (225 aa).

Aspartate 61 acts as the Proton acceptor in catalysis.

It belongs to the uracil-DNA glycosylase (UDG) superfamily. UNG family.

It localises to the cytoplasm. It carries out the reaction Hydrolyzes single-stranded DNA or mismatched double-stranded DNA and polynucleotides, releasing free uracil.. In terms of biological role, excises uracil residues from the DNA which can arise as a result of misincorporation of dUMP residues by DNA polymerase or due to deamination of cytosine. In Actinobacillus pleuropneumoniae serotype 5b (strain L20), this protein is Uracil-DNA glycosylase.